Here is a 215-residue protein sequence, read N- to C-terminus: Probable GTP-binding protein EngB (215 aa).

Positions 30-204 constitute an EngB-type G domain; that stretch reads EGLEVAFAGR…QMVLAQWLGL (175 aa). Residues 38 to 45, 64 to 68, 82 to 85, 149 to 152, and 182 to 185 each bind GTP; these read GRSNAGKS, GRTQL, DLPG, TKAD, and LFSA. Positions 45 and 66 each coordinate Mg(2+).

Belongs to the TRAFAC class TrmE-Era-EngA-EngB-Septin-like GTPase superfamily. EngB GTPase family. It depends on Mg(2+) as a cofactor.

Functionally, necessary for normal cell division and for the maintenance of normal septation. The chain is Probable GTP-binding protein EngB from Pseudomonas paraeruginosa (strain DSM 24068 / PA7) (Pseudomonas aeruginosa (strain PA7)).